The chain runs to 75 residues: Carwaprin-a (75 aa).

A signal peptide spans 1–24; it reads MSSGGLLLLLGLLTLWAELTPISG. Residues 27-72 form the WAP domain; sequence RPKKPGLCPPRPQKPPCVRECKNDWRCPGEQKCCRYGCIYECRDPI. 4 disulfide bridges follow: cysteine 34-cysteine 60, cysteine 43-cysteine 64, cysteine 47-cysteine 59, and cysteine 53-cysteine 68.

It belongs to the venom waprin family. In terms of tissue distribution, expressed by the venom gland.

The protein localises to the secreted. Functionally, damages membranes of susceptible bacteria. Has no hemolytic activity. Not toxic to mice. Does not inhibit the proteinases elastase and cathepsin G. This is Carwaprin-a from Tropidechis carinatus (Australian rough-scaled snake).